Reading from the N-terminus, the 308-residue chain is Phosphoribosylaminoimidazole-succinocarboxamide synthase (308 aa).

It belongs to the SAICAR synthetase family.

The catalysed reaction is 5-amino-1-(5-phospho-D-ribosyl)imidazole-4-carboxylate + L-aspartate + ATP = (2S)-2-[5-amino-1-(5-phospho-beta-D-ribosyl)imidazole-4-carboxamido]succinate + ADP + phosphate + 2 H(+). The protein operates within purine metabolism; IMP biosynthesis via de novo pathway; 5-amino-1-(5-phospho-D-ribosyl)imidazole-4-carboxamide from 5-amino-1-(5-phospho-D-ribosyl)imidazole-4-carboxylate: step 1/2. This chain is Phosphoribosylaminoimidazole-succinocarboxamide synthase, found in Xanthomonas euvesicatoria pv. vesicatoria (strain 85-10) (Xanthomonas campestris pv. vesicatoria).